The following is a 378-amino-acid chain: Erythronate-4-phosphate dehydrogenase (378 aa).

2 residues coordinate substrate: Ser45 and Thr66. Residues Asp146 and Thr175 each contribute to the NAD(+) site. The active site involves Arg208. NAD(+) is bound at residue Asp232. Residue Glu237 is part of the active site. The active-site Proton donor is His254. Gly257 contacts NAD(+). A substrate-binding site is contributed by Tyr258.

It belongs to the D-isomer specific 2-hydroxyacid dehydrogenase family. PdxB subfamily. In terms of assembly, homodimer.

It is found in the cytoplasm. The catalysed reaction is 4-phospho-D-erythronate + NAD(+) = (R)-3-hydroxy-2-oxo-4-phosphooxybutanoate + NADH + H(+). Its pathway is cofactor biosynthesis; pyridoxine 5'-phosphate biosynthesis; pyridoxine 5'-phosphate from D-erythrose 4-phosphate: step 2/5. In terms of biological role, catalyzes the oxidation of erythronate-4-phosphate to 3-hydroxy-2-oxo-4-phosphonooxybutanoate. The protein is Erythronate-4-phosphate dehydrogenase of Escherichia coli (strain 55989 / EAEC).